The sequence spans 315 residues: Eukaryotic translation initiation factor 2 subunit 1 (315 aa).

The S1 motif domain maps to 17–88 (EDVVMVNVRS…EKGYIDLSKR (72 aa)). A Phosphoserine; by HRI modification is found at Ser49. A Phosphoserine modification is found at Ser52. N6-acetyllysine is present on Lys141. Ser158 is subject to Phosphoserine. A phosphothreonine mark is found at Thr279 and Thr281. Positions 292-315 (RLERENAEVDGDDDAEEMEAKAED) are disordered. A compositionally biased stretch (acidic residues) spans 299–308 (EVDGDDDAEE).

It belongs to the eIF-2-alpha family. In terms of assembly, eukaryotic translation initiation factor 2 eIF2 is a heterotrimeric complex composed of an alpha (EIF2S1), a beta (EIF2S2) and a gamma (EIF2S3) chain. eIF2 is member of the 43S pre-initiation complex (43S PIC). eIF2 forms a complex with at least CELF1/CUGBP1, CALR, CALR3, EIF2S1, EIF2S2, HSP90B1 and HSPA5. Interaction with METAP2 protects EIF2S1 from inhibitory phosphorylation. Interacts with ABCF1. Associates with ribosomes. Interacts with DDX3X in an RNA-independent manner. Post-translationally, phosphorylation at Ser-49 and Ser-52 stabilizes the eIF-2/GDP/eIF2B complex and prevents GDP/GTP exchange reaction, thus impairing the recycling of eIF-2 between successive rounds of initiation and leading to global inhibition of translation, while concomitantly initiating the preferential translation of integrated stress response (ISR)-specific mRNAs. Substrate for at least 4 kinases: EIF2AK1/HRI, EIF2AK2/PKR, EIF2AK3/PERK and EIF2AK4/GCN2. Phosphorylation at Ser-52 by the EIF2AK3/PERK protein kinase occurs in response to the unfolded protein response. Phosphorylation on Ser-52 by the EIF2AK4/GCN2 protein kinase occurs in response to amino acid starvation and UV irradiation. Phosphorylation at Ser-52 by EIF2AK1/HRI in response to mitochondrial damage promotes relocalization to the mitochondrial surface.

It is found in the cytoplasm. The protein resides in the stress granule. Its subcellular location is the cytosol. The protein localises to the mitochondrion. With respect to regulation, activity is regulated by phosphorylation at Ser-49 and Ser-52, which stabilizes the eIF2/GDP/eIF2B complex and prevents the eIF2B-mediated exchange of GDP for GTP, thereby preventing the formation of the 43S pre-initiation complex (43S PIC). This results in the global attenuation of 5' cap-dependent protein synthesis and concomitant translation of ISR-specific mRNAs that contain a short upstream open reading frame (uORF) in their 5' UTR, such as ATF4, ATF5, DDIT3/CHOP and PPP1R15A/GADD34. Functionally, member of the eIF2 complex that functions in the early steps of protein synthesis by forming a ternary complex with GTP and initiator tRNA. This complex binds to a 40S ribosomal subunit, followed by mRNA binding to form a 43S pre-initiation complex. Junction of the 60S ribosomal subunit to form the 80S initiation complex is preceded by hydrolysis of the GTP bound to eIF2 and release of an eIF2-GDP binary complex. In order for eIF2 to recycle and catalyze another round of initiation, the GDP bound to eIF2 must exchange with GTP by way of a reaction catalyzed by eIF2B. EIF2S1/eIF2-alpha is a key component of the integrated stress response (ISR), required for adaptation to various stress: phosphorylation by metabolic-stress sensing protein kinases (EIF2AK1/HRI, EIF2AK2/PKR, EIF2AK3/PERK and EIF2AK4/GCN2) in response to stress converts EIF2S1/eIF2-alpha in a global protein synthesis inhibitor, leading to a attenuation of cap-dependent translation, while concomitantly initiating the preferential translation of ISR-specific mRNAs, such as the transcriptional activators ATF4 and QRICH1, and hence allowing ATF4- and QRICH1-mediated reprogramming. EIF2S1/eIF2-alpha also acts as an activator of mitophagy in response to mitochondrial damage: phosphorylation by EIF2AK1/HRI promotes relocalization to the mitochondrial surface, thereby triggering PRKN-independent mitophagy. The protein is Eukaryotic translation initiation factor 2 subunit 1 (EIF2S1) of Sus scrofa (Pig).